We begin with the raw amino-acid sequence, 286 residues long: MKNVLSIQSHVVFGYAGNKSSTFPMQLSGIDVWALNTVQFSNHTQYGKWTGMVVPHQQIPEIADGIDAIGELKNCDAVLSGYIGSADQVAEIVKVSHLVKTRNAAALYLCDPVMGSAEKGCVVADGVREGLIDIALPQADIITPNLLELRELSGLRAENFEQAVIAAQHLLTKGPKTVIVKHLGSAGKYPGKFDMLLANREGVWCLSRPLYPFAKDPVGVGDLIAGLFLANLLNGKSEPEAFELTGNAVNDVMEITHKLNSYELQLIEARHAIMAPQNRYKAEKIA.

Residues S9 and 44 to 45 (TQ) contribute to the substrate site. Residues D111, E148, and K181 each coordinate ATP. D222 serves as a coordination point for substrate.

This sequence belongs to the pyridoxine kinase family. PdxY subfamily. As to quaternary structure, homodimer. Mg(2+) is required as a cofactor.

It catalyses the reaction pyridoxal + ATP = pyridoxal 5'-phosphate + ADP + H(+). The protein operates within cofactor metabolism; pyridoxal 5'-phosphate salvage; pyridoxal 5'-phosphate from pyridoxal: step 1/1. Its function is as follows. Pyridoxal kinase involved in the salvage pathway of pyridoxal 5'-phosphate (PLP). Catalyzes the phosphorylation of pyridoxal to PLP. The polypeptide is Pyridoxal kinase PdxY (Actinobacillus succinogenes (strain ATCC 55618 / DSM 22257 / CCUG 43843 / 130Z)).